A 292-amino-acid polypeptide reads, in one-letter code: ATP synthase gamma chain (292 aa).

Belongs to the ATPase gamma chain family. F-type ATPases have 2 components, CF(1) - the catalytic core - and CF(0) - the membrane proton channel. CF(1) has five subunits: alpha(3), beta(3), gamma(1), delta(1), epsilon(1). CF(0) has three main subunits: a, b and c.

The protein localises to the cell inner membrane. Functionally, produces ATP from ADP in the presence of a proton gradient across the membrane. The gamma chain is believed to be important in regulating ATPase activity and the flow of protons through the CF(0) complex. This chain is ATP synthase gamma chain, found in Bradyrhizobium sp. (strain ORS 278).